The sequence spans 446 residues: Telomere-binding protein 51 kDa subunit (446 aa).

It belongs to the telombin family. In terms of assembly, monomer.

The protein localises to the nucleus. It localises to the chromosome. It is found in the telomere. In terms of biological role, may function as protective capping of the single-stranded telomeric overhang. May also participate in telomere length regulation during DNA replication. Binds specifically to the T4G4-containing extension on the 3'strand and protects this region of the telomere from nuclease digestion and chemical modification. The polypeptide is Telomere-binding protein 51 kDa subunit (Euplotes crassus).